Here is a 556-residue protein sequence, read N- to C-terminus: Glutamine--tRNA ligase (556 aa).

A 'HIGH' region motif is present at residues 34 to 44 (PEPNGYLHIGH). ATP contacts are provided by residues 35–37 (EPN) and 41–47 (HIGHAKS). L-glutamine-binding residues include Asp-67 and Tyr-212. Residues Thr-231, 261-262 (RL), and 269-271 (MSK) contribute to the ATP site. The 'KMSKS' region signature appears at 268–272 (IMSKR).

It belongs to the class-I aminoacyl-tRNA synthetase family. As to quaternary structure, monomer.

Its subcellular location is the cytoplasm. The catalysed reaction is tRNA(Gln) + L-glutamine + ATP = L-glutaminyl-tRNA(Gln) + AMP + diphosphate. This is Glutamine--tRNA ligase from Sodalis glossinidius (strain morsitans).